The sequence spans 229 residues: MLGWGMDMSKSVMLCCLLSVQPCYAGYVFVSPKLGVYGEALGGPDTVGKAVKQADGTKIAPKIWYYAPRTPLFGVDIGYQADNGLLFRVNLDAALTRLMFRSQCVVGYSLRFGWGGGYVSIASGIECSATVDDAQYEPYTKNEQGTTVASNTVFPCTVLEALVRDPALTADYLLYGMQSCYAIPLHVGVSYYLAKRWGIECALTASLGISMRTDVRVPYAVRIGPVFRV.

It to T.pallidum TP_0315, TP_0618 and TP_0619.

This is an uncharacterized protein from Treponema pallidum (strain Nichols).